We begin with the raw amino-acid sequence, 61 residues long: uncharacterized protein (61 aa).

This is an uncharacterized protein from Homo sapiens (Human).